The primary structure comprises 540 residues: T-complex protein 1 subunit delta (540 aa).

Low complexity predominate over residues 1 to 12 (MPPAVPAAAATA). Residues 1–32 (MPPAVPAAAATARQSASGRERNFKDKDKPESV) are disordered. Over residues 18 to 31 (GRERNFKDKDKPES) the composition is skewed to basic and acidic residues.

The protein belongs to the TCP-1 chaperonin family. In terms of assembly, heterooligomeric complex of about 850 to 900 kDa that forms two stacked rings, 12 to 16 nm in diameter.

It localises to the cytoplasm. Molecular chaperone; assists the folding of proteins upon ATP hydrolysis. Known to play a role, in vitro, in the folding of actin and tubulin. In Caenorhabditis elegans, this protein is T-complex protein 1 subunit delta (cct-4).